Here is a 192-residue protein sequence, read N- to C-terminus: Cytochrome b-245 light chain (192 aa).

The Cytoplasmic segment spans residues 2-7; that stretch reads GQIEWA. The helical transmembrane segment at 8-30 threads the bilayer; sequence MWANEQALASGLILMTGGIVATA. At 31–35 the chain is on the extracellular side; that stretch reads GQFTQ. The helical transmembrane segment at 36-53 threads the bilayer; the sequence is WYLGTYSIAAGVLVCLLE. Residues 54–69 lie on the Cytoplasmic side of the membrane; the sequence is YPRGRRTKGSTMERCE. An intramembrane segment occupies 70–80; the sequence is QKYMTKVVKAF. Residues 81 to 86 lie on the Cytoplasmic side of the membrane; it reads GPLSRN. Residues 87–104 form a helical membrane-spanning segment; it reads YYIRAFLHLGLSVPAGFL. A topological domain (extracellular) is located at residue L105. The helical transmembrane segment at 106-126 threads the bilayer; it reads ATILGTACLAIASGIYLLAAI. Over 127–192 the chain is Cytoplasmic; the sequence is RGEQWTPIEP…TPCPVTDEVV (66 aa). The tract at residues 134-192 is disordered; it reads IEPKPKERPQVGGTIKQPPSNPPPRPPPEARKKPGEEAVAGVPRGAPRKTPCPVTDEVV. T147 carries the phosphothreonine modification. A Glycyl lysine isopeptide (Lys-Gly) (interchain with G-Cter in ubiquitin) cross-link involves residue K149.

This sequence belongs to the p22phox family. Component of the phagocyte NADPH oxidase core complex/cytochrome b558 complex, composed of CYBB (heavy chain (beta)) and CYBA (light chain (alpha)). Component of the phagocyte NADPH oxidase complex composed of an obligatory core heterodimer formed by the membrane proteins CYBA and CYBB and the cytosolic regulatory subunits NCF1/p47-phox, NCF2/p67-phox, NCF4/p40-phox and the small GTPase RAC1 or RAC2. Interacts with NCF1 (via SH3 domain). Interacts with SH3PXD2A. Interacts with DUOX1, DUOX2 and TPO. Interacts with NOX4; this interaction mediates superoxide generation. Interacts with calprotectin (S100A8/9). Interacts with GBP7. Interacts with NOXO1. Forms a heterodimer with NOX3 and is essential for activity and cell membrane localization of NOX3. Interacts with NOX1. Post-translationally, phosphorylation at Thr-147 enhances NADPH oxidase activity by promoting NCF1/p47-phox binding. Ubiquitinated at Lys-149 likely by RNF145.

The protein localises to the cell membrane. Functionally, subunit of NADPH oxidase complexes that is required for the NADPH oxidase activity that generates, in various cell types, superoxide from molecular oxygen utilizing NADPH as an electron donor. Subunit of the phagocyte NADPH oxidase complex that mediates the transfer of electrons from cytosolic NADPH to O2 to produce the superoxide anion (O2(-)). In the activated complex, electrons are first transferred from NADPH to flavin adenine dinucleotide (FAD) and subsequently transferred via two heme molecules to molecular oxygen, producing superoxide through an outer-sphere reaction. Activation of the NADPH oxidase complex is initiated by the assembly of cytosolic subunits of the NADPH oxidase complex with the core NADPH oxidase complex to form a complex at the plasma membrane or phagosomal membrane. This activation process is initiated by phosphorylation dependent binding of the cytosolic NCF1/p47-phox subunit to the C-terminus of CYBA/p22-phox. Aassociates with NOX3 to form a functional NADPH oxidase constitutively generating superoxide. The protein is Cytochrome b-245 light chain of Sus scrofa (Pig).